Reading from the N-terminus, the 153-residue chain is D-aminoacyl-tRNA deacylase (153 aa).

The short motif at 137–138 (GP) is the Gly-cisPro motif, important for rejection of L-amino acids element.

It belongs to the DTD family. Homodimer.

The protein resides in the cytoplasm. The enzyme catalyses glycyl-tRNA(Ala) + H2O = tRNA(Ala) + glycine + H(+). It catalyses the reaction a D-aminoacyl-tRNA + H2O = a tRNA + a D-alpha-amino acid + H(+). Functionally, an aminoacyl-tRNA editing enzyme that deacylates mischarged D-aminoacyl-tRNAs. Also deacylates mischarged glycyl-tRNA(Ala), protecting cells against glycine mischarging by AlaRS. Acts via tRNA-based rather than protein-based catalysis; rejects L-amino acids rather than detecting D-amino acids in the active site. By recycling D-aminoacyl-tRNA to D-amino acids and free tRNA molecules, this enzyme counteracts the toxicity associated with the formation of D-aminoacyl-tRNA entities in vivo and helps enforce protein L-homochirality. In Herpetosiphon aurantiacus (strain ATCC 23779 / DSM 785 / 114-95), this protein is D-aminoacyl-tRNA deacylase.